A 230-amino-acid chain; its full sequence is UPF0494 membrane protein PB2B2.14c (230 aa).

Transmembrane regions (helical) follow at residues 78-98 (WPLL…NFEV), 120-140 (IWGP…GLIY), and 148-168 (AIPL…VAMV).

Belongs to the UPF0494 family.

Its subcellular location is the membrane. The sequence is that of UPF0494 membrane protein PB2B2.14c from Schizosaccharomyces pombe (strain 972 / ATCC 24843) (Fission yeast).